We begin with the raw amino-acid sequence, 242 residues long: Endoglucanase-5 (242 aa).

A signal peptide spans 1–17 (MKATLVLGSLIVGAVSA). The catalytic stretch occupies residues 18 to 182 (YKATTTRYYD…ETDPTPVLGN (165 aa)). Aspartate 27 functions as the Nucleophile in the catalytic mechanism. Aspartate 134 (proton donor) is an active-site residue. Residues 177–206 (TPVLGNDTGSTPPGSSPPATSSSPPSGGGQ) are disordered. A glycan (N-linked (GlcNAc...) asparagine) is linked at asparagine 182. Residues 184–201 (TGSTPPGSSPPATSSSPP) are compositionally biased toward low complexity. A CBM1 domain is found at 205-241 (GQQTLYGQCGGAGWTGPTTCQAPGTCKVQNQWYSQCL). 2 disulfides stabilise this stretch: cysteine 213/cysteine 230 and cysteine 224/cysteine 240.

This sequence belongs to the glycosyl hydrolase 45 (cellulase K) family.

The enzyme catalyses Endohydrolysis of (1-&gt;4)-beta-D-glucosidic linkages in cellulose, lichenin and cereal beta-D-glucans.. The polypeptide is Endoglucanase-5 (egl5) (Hypocrea jecorina (Trichoderma reesei)).